We begin with the raw amino-acid sequence, 232 residues long: tRNA (guanine-N(1)-)-methyltransferase (232 aa).

Residues Gly-111 and 131–136 (IGDYIL) contribute to the S-adenosyl-L-methionine site.

This sequence belongs to the RNA methyltransferase TrmD family. In terms of assembly, homodimer.

It is found in the cytoplasm. The catalysed reaction is guanosine(37) in tRNA + S-adenosyl-L-methionine = N(1)-methylguanosine(37) in tRNA + S-adenosyl-L-homocysteine + H(+). Functionally, specifically methylates guanosine-37 in various tRNAs. This is tRNA (guanine-N(1)-)-methyltransferase from Bartonella henselae (strain ATCC 49882 / DSM 28221 / CCUG 30454 / Houston 1) (Rochalimaea henselae).